Here is a 217-residue protein sequence, read N- to C-terminus: Adenylate kinase (217 aa).

10–15 lines the ATP pocket; that stretch reads GAGKGT. The interval 30–59 is NMP; that stretch reads STGDMLRAAVKAESELGLQVKEVMASGGLV. Residues Thr31, Arg36, 57–59, 85–88, and Gln92 each bind AMP; these read GLV and GFPR. An LID region spans residues 122-159; the sequence is GRRVHEGSGRIYHVKYDPPKVEGKDDETGEALIQREDD. ATP contacts are provided by residues Arg123 and 132-133; that span reads IY. AMP contacts are provided by Arg156 and Arg167. Gly203 contacts ATP.

It belongs to the adenylate kinase family. As to quaternary structure, monomer.

The protein resides in the cytoplasm. It catalyses the reaction AMP + ATP = 2 ADP. The protein operates within purine metabolism; AMP biosynthesis via salvage pathway; AMP from ADP: step 1/1. Functionally, catalyzes the reversible transfer of the terminal phosphate group between ATP and AMP. Plays an important role in cellular energy homeostasis and in adenine nucleotide metabolism. This Marinobacter nauticus (strain ATCC 700491 / DSM 11845 / VT8) (Marinobacter aquaeolei) protein is Adenylate kinase.